The chain runs to 380 residues: Erythronate-4-phosphate dehydrogenase (380 aa).

Ser45 and Thr66 together coordinate substrate. NAD(+) is bound by residues Asp146 and Thr174. Arg207 is a catalytic residue. Residue Asp231 participates in NAD(+) binding. Glu236 is a catalytic residue. His253 (proton donor) is an active-site residue. Gly256 contributes to the NAD(+) binding site. Tyr257 contacts substrate.

The protein belongs to the D-isomer specific 2-hydroxyacid dehydrogenase family. PdxB subfamily. Homodimer.

It is found in the cytoplasm. The catalysed reaction is 4-phospho-D-erythronate + NAD(+) = (R)-3-hydroxy-2-oxo-4-phosphooxybutanoate + NADH + H(+). Its pathway is cofactor biosynthesis; pyridoxine 5'-phosphate biosynthesis; pyridoxine 5'-phosphate from D-erythrose 4-phosphate: step 2/5. Catalyzes the oxidation of erythronate-4-phosphate to 3-hydroxy-2-oxo-4-phosphonooxybutanoate. In Pseudomonas fluorescens (strain Pf0-1), this protein is Erythronate-4-phosphate dehydrogenase.